Reading from the N-terminus, the 968-residue chain is RNA polymerase-associated protein RapA (968 aa).

The Helicase ATP-binding domain maps to 164–334 (DVGRRHAPRV…FARLRLLDPN (171 aa)). ATP is bound at residue 177–184 (DEVGLGKT). The DEAH box signature appears at 280–283 (DEAH). Residues 490–685 (RVEWLMGYLT…ALKAQLEQGR (196 aa)) enclose the Helicase C-terminal domain.

It belongs to the SNF2/RAD54 helicase family. RapA subfamily. Interacts with the RNAP. Has a higher affinity for the core RNAP than for the holoenzyme. Its ATPase activity is stimulated by binding to RNAP.

Transcription regulator that activates transcription by stimulating RNA polymerase (RNAP) recycling in case of stress conditions such as supercoiled DNA or high salt concentrations. Probably acts by releasing the RNAP, when it is trapped or immobilized on tightly supercoiled DNA. Does not activate transcription on linear DNA. Probably not involved in DNA repair. The sequence is that of RNA polymerase-associated protein RapA from Salmonella newport (strain SL254).